The primary structure comprises 375 residues: MAPDIDNIWSSTTDAAESPVDERRILLKRAVGQKILVPSILSLMPAWPSQVHPAVDEVNTEIDKWLPTVNVAEKKKAKHRARGNYAFLTAVYYPYCKETERLVVIAKFLYWIFFWDDEIDTGGELTEDEEGTIQCCEETNKCVDDCLGPNPNYNPPPNSRGTVEMFYPILRDFRAGLGPVSTERLRLELHDYINGVAKQQKVRQGERLPDPWYHFKIRSDDVGVIPSITQNEYAMKFELPEYVRRHEAMEEIVQECTKLTVLLNDVLSLQKEFRDSQLENLVLLFMNRYNLSLQAAVDKVLDLIREHYAICVAAEKRLPWSEDDEKLNDDIREYVRGCQRLATGTAYWSYSCERYFKQTQVNDKWEVLLDLSYVE.

Mg(2+) contacts are provided by Asp116, Asn264, and Ser268. Residues 116 to 120 (DDEID) carry the D(D/E)XX(D/E) motif motif. Positions 264–272 (NDVLSLQKE) match the NSE motif motif. The short motif at 348-355 (WSYSCERY) is the WxxxxxRY motif element. (2E,6E)-farnesyl diphosphate is bound by residues Arg354 and Tyr355.

It belongs to the terpene synthase family. In terms of assembly, homodimer. Requires Mg(2+) as cofactor.

The catalysed reaction is (2E,6E)-farnesyl diphosphate + H2O = trichobrasilenol + diphosphate. It participates in secondary metabolite biosynthesis. Terpene cyclase; part of the gene cluster that mediates the biosynthesis of the brasilane terpene glycosides brasilane D and E. The biosynthesis starts with the activity of the terpene cyclase braA that converts farnesyl pyrophosphate into the sesquiterpene alcohol trichobrasilenol. Subsequently, trichobrasilenol is glycosylated by the O-glycosyltransferase braB putatively using UDP-GlcNAc as sugar donor to yield brasilane A. The latter then undergoes two rounds of oxidation performed by the cytochrome P450 monooxygenase braC. In the first round braC hydroxylates C-12 forming brasilane D, which serves as substrate in the second round to establish the epoxide at the bond between C-5 and C-10 and oxidize the alcohol at C-12 to an aldehyde leading to the final product brasilane E. This is Terpene cyclase braA from Annulohypoxylon truncatum (Hypoxylon truncatum).